The primary structure comprises 295 residues: MDVDKLIEAGKIAKKVREEAVKLAKPGVSLLELAEKIESRIVELGGKPAFPANLSLNEVAAHYTPYKGDQTVLKEGDYLKIDLGVHIDGYIADTAVTVRVGMDFDELMEAAKEALESAISVARAGVEVKELGKAIENEIRKRGFNPIVNLSGHKIERYKLHAGVSIPNIYRPHDNYVLQEGDVFAIEPFATTGAGQVIEVPPTLIYMYVRDAPVRMAQARFLLAKIKREYKTLPFAYRWLQGEMPEGQLKLALRSLERSGALYGYPVLREIRGGMVTQFEHTIIVEKDSVTVTTE.

H62 contacts substrate. Residues D82, D93, and H153 each coordinate a divalent metal cation. H161 contributes to the substrate binding site. A divalent metal cation contacts are provided by E187 and E280.

The protein belongs to the peptidase M24A family. Methionine aminopeptidase archaeal type 2 subfamily. In terms of assembly, monomer. Requires Co(2+) as cofactor. The cofactor is Zn(2+). It depends on Mn(2+) as a cofactor. Fe(2+) serves as cofactor.

The catalysed reaction is Release of N-terminal amino acids, preferentially methionine, from peptides and arylamides.. Removes the N-terminal methionine from nascent proteins. The N-terminal methionine is often cleaved when the second residue in the primary sequence is small and uncharged (Met-Ala-, Cys, Gly, Pro, Ser, Thr, or Val). The sequence is that of Methionine aminopeptidase from Pyrococcus horikoshii (strain ATCC 700860 / DSM 12428 / JCM 9974 / NBRC 100139 / OT-3).